The primary structure comprises 607 residues: MASLPWSLTTSTAIANTTNISAFPPSPLFQRASHVPVARNRSRRFAPSKVSCNSANGDPNSDSTSDVRETSSGKLDRRNVLLGIGGLYGAAGGLGATKPLAFGAPIQAPDISKCGTATVPDGVTPTNCCPPVTTKIIDFQLPSSGSPMRTRPAAHLVSKEYLAKYKKAIELQKALPDDDPRSFKQQANVHCTYCQGAYDQVGYTDLELQVHASWLFLPFHRYYLYFNERILAKLIDDPTFALPYWAWDNPDGMYMPTIYASSPSSLYDEKRNAKHLPPTVIDLDYDGTEPTIPDDELKTDNLAIMYKQIVSGATTPKLFLGYPYRAGDAIDPGAGTLEHAPHNIVHKWTGLADKPSEDMGNFYTAGRDPIFFGHHANVDRMWNIWKTIGGKNRKDFTDTDWLDATFVFYDENKQLVKVKVSDCVDTSKLRYQYQDIPIPWLPKNTKAKAKTTTKSSKSGVAKAAELPKTTISSIGDFPKALNSVIRVEVPRPKKSRSKKEKEDEEEVLLIKGIELDRENFVKFDVYINDEDYSVSRPKNSEFAGSFVNVPHKHMKEMKTKTNLRFAINELLEDLGAEDDESVIVTIVPRAGGDDVTIGGIEIEFVSD.

The N-terminal 103 residues, 1–103 (MASLPWSLTT…LGATKPLAFG (103 aa)), are a transit peptide targeting the chloroplast. The segment at 39 to 73 (RNRSRRFAPSKVSCNSANGDPNSDSTSDVRETSSG) is disordered. A compositionally biased stretch (polar residues) spans 50–64 (VSCNSANGDPNSDST). 2 disulfides stabilise this stretch: cysteine 114–cysteine 129 and cysteine 128–cysteine 191. Histidine 190, histidine 211, histidine 220, histidine 342, histidine 346, and histidine 375 together coordinate Cu cation. The 2'-(S-cysteinyl)-histidine (Cys-His) cross-link spans 194–211 (CQGAYDQVGYTDLELQVH).

Belongs to the tyrosinase family. Cu(2+) serves as cofactor.

It localises to the plastid. The protein resides in the chloroplast thylakoid lumen. It catalyses the reaction 2 catechol + O2 = 2 1,2-benzoquinone + 2 H2O. In terms of biological role, catalyzes the oxidation of mono- and o-diphenols to o-diquinones. The protein is Polyphenol oxidase, chloroplastic of Vitis vinifera (Grape).